The chain runs to 257 residues: Nickel import system ATP-binding protein NikD (257 aa).

Residues 4–245 (IDIQNLTIKN…HLHPYTERLI (242 aa)) enclose the ABC transporter domain. Residue 37 to 44 (GESGAGKS) coordinates ATP.

Belongs to the ABC transporter superfamily. In terms of assembly, the complex is composed of two ATP-binding proteins (NikD and NikE), two transmembrane proteins (NikB and NikC) and a solute-binding protein (NikA).

The protein localises to the cell membrane. The catalysed reaction is Ni(2+)(out) + ATP + H2O = Ni(2+)(in) + ADP + phosphate + H(+). In terms of biological role, part of the ABC transporter complex NikABCDE (Opp2) involved in nickel import. Probably responsible for energy coupling to the transport system. This Staphylococcus aureus (strain MW2) protein is Nickel import system ATP-binding protein NikD.